Reading from the N-terminus, the 103-residue chain is Large ribosomal subunit protein bL21 (103 aa).

Belongs to the bacterial ribosomal protein bL21 family. As to quaternary structure, part of the 50S ribosomal subunit. Contacts protein L20.

This protein binds to 23S rRNA in the presence of protein L20. In Desulforapulum autotrophicum (strain ATCC 43914 / DSM 3382 / VKM B-1955 / HRM2) (Desulfobacterium autotrophicum), this protein is Large ribosomal subunit protein bL21.